We begin with the raw amino-acid sequence, 199 residues long: Pre-histone-like nucleoprotein (199 aa).

Position 2 is an N-acetylserine; by host (Ser2). The propeptide occupies 2-23 (SILISPSDNTGWGLGTGKMYGG). Lys26 is modified (N6-acetyllysine; by host). The Nuclear localization signal signature appears at 189-199 (RRKASVRRRRT).

The protein belongs to the adenoviridae histone-like nucleoprotein family. As to quaternary structure, interacts with the core-capsid bridging protein; this interaction bridges the virus core to the capsid. Interacts with host NPM1; this interaction might play a role in placing the pre-histone-like nucleoprotein on the viral DNA or regulating viral gene expression. Interacts with host HMGB1; this interaction inhibits host immune response. Cleaved near the N-terminus by the viral protease during virion maturation to form the mature protein.

The protein localises to the virion. It is found in the host nucleus. The protein resides in the host nucleolus. In terms of biological role, plays a role in the inhibition of host immune response within the nucleus. Interacts with cellular nucleosomes and immobilizes the host immune danger signal HMGB1 on chromatin. In turn, prevents HMGB1 release out of the cell and thus decreases inflammation. Also plays a role in the wrapping and condensation of the viral DNA. May also promote viral genome import into the nucleus. This chain is Pre-histone-like nucleoprotein, found in Murine adenovirus A serotype 1 (MAdV-1).